The sequence spans 260 residues: MSIRIKIDKLRQIVAYFSEFSEEVSINVDSTDELMYIFAALGGSVNIWAIIPLSASVFYRGAENIVFNLPVSKVKSCLCSFHNDAIIDIEPDLENNLVKLSSYHVVSVDCNKELMPIRTDTTICLSIDQKKSYVFNFHKYEEKCCGRTVIHLEWLLGFIKCISQHQHLTIMFKDDNIIMKTPGNTDAFSREYSMTECSQELQKFSFKIAISSLNKLRGFKKRVNVFETRIVMDNDDNILGMLFSDRVQSFKINIFMAFLD.

The protein belongs to the chordopoxvirinae VLTF-1 family. In terms of assembly, interacts with the late transcription factors VLTF-2 and VLTF-3. Interacts with the late transcription elongation factor VLTF-4. Interacts with itself.

In terms of biological role, associates with RNA polymerase to initiate transcription from late gene promoters. The sequence is that of Late transcription factor 1 (OPG093) from Homo sapiens (Human).